A 343-amino-acid chain; its full sequence is MPKSRIMLDVLKGEAHFPPPLWMMRQAGRYLPEYRETRRRAGSFLDLCYDPDLAVEVTLQPIERFGFDASILFSDILVVPHALGRDVRFEEGRGPLLTPISVAEIMALESDVFHVNLEPVYETVRRLRAKLPDETTLIGFCGAPWTVATYMIAGHGTPDQAPARLFAYREPAAFQHLLKVLADHSAAYLIRQIEAGADVVQIFDSWSGVLDDASFDQFCVWPVAEIVRQVQAVHPDVPIIGFPKGAGARYRTYRQKTGVTGLGIDWTVPLAAAKDLQRSGAVQGNLDPLRLVAGGKALSDGVEAILKALGDGPLIFNLGHGITPETPIAHVEAMVKQVRSAAR.

Substrate-binding positions include 25–29, Phe44, Asp75, Tyr150, Ser205, and His320; that span reads RQAGR.

The protein belongs to the uroporphyrinogen decarboxylase family. Homodimer.

The protein resides in the cytoplasm. The catalysed reaction is uroporphyrinogen III + 4 H(+) = coproporphyrinogen III + 4 CO2. It functions in the pathway porphyrin-containing compound metabolism; protoporphyrin-IX biosynthesis; coproporphyrinogen-III from 5-aminolevulinate: step 4/4. Functionally, catalyzes the decarboxylation of four acetate groups of uroporphyrinogen-III to yield coproporphyrinogen-III. This is Uroporphyrinogen decarboxylase from Mesorhizobium japonicum (strain LMG 29417 / CECT 9101 / MAFF 303099) (Mesorhizobium loti (strain MAFF 303099)).